Reading from the N-terminus, the 191-residue chain is MYALEQKILNEGIVLSDQVLKVDAFLNHQIDPVLMQQIGKEFAARFKDTGITKIVTIEASGIAPAVMAGLELGVPVIFARKYQSLTLKDDLYRSKVFSFTKQVESTIAISNKHINAEDKVLVIDDFLANGQAALGLIDLIHQANADIVGVGIVIEKSFQPGRDLLLEKGYRVESLARVASLTNGQVTFVIE.

2 residues coordinate xanthine: Leu20 and Asn27. Residue 128-132 coordinates 5-phospho-alpha-D-ribose 1-diphosphate; that stretch reads ANGQA. A xanthine-binding site is contributed by Lys156.

This sequence belongs to the purine/pyrimidine phosphoribosyltransferase family. Xpt subfamily. As to quaternary structure, homodimer.

The protein resides in the cytoplasm. The enzyme catalyses XMP + diphosphate = xanthine + 5-phospho-alpha-D-ribose 1-diphosphate. It functions in the pathway purine metabolism; XMP biosynthesis via salvage pathway; XMP from xanthine: step 1/1. In terms of biological role, converts the preformed base xanthine, a product of nucleic acid breakdown, to xanthosine 5'-monophosphate (XMP), so it can be reused for RNA or DNA synthesis. The protein is Xanthine phosphoribosyltransferase of Acinetobacter baylyi (strain ATCC 33305 / BD413 / ADP1).